We begin with the raw amino-acid sequence, 305 residues long: Mas-related G-protein coupled receptor member A7 (305 aa).

The Extracellular portion of the chain corresponds to 1–17; sequence MDETSPRSIDIESLIPN. Residues 18–38 form a helical membrane-spanning segment; the sequence is LMIIIFGLVGLTGNAIVLWLL. At 39–46 the chain is on the cytoplasmic side; sequence GFCLHRNA. Residues 47-67 traverse the membrane as a helical segment; that stretch reads FLVYILNLALADFLFLLCHFI. At 68–81 the chain is on the extracellular side; that stretch reads NSAMFLLKVPIPNG. Residues 82 to 102 form a helical membrane-spanning segment; the sequence is IFVYCFYTIKMVLYITGLSML. Topologically, residues 103 to 129 are cytoplasmic; sequence SAISTERCLSVLCPIWYHCRRPEHTST. A helical membrane pass occupies residues 130–150; it reads VMCAVIWIFSVLICILKEYFC. Over 151–167 the chain is Extracellular; that stretch reads DFFGTKLGNYYVCQASN. The chain crosses the membrane as a helical span at residues 168-188; it reads FFMGAYLMFLFVVLCLSTLAL. Topologically, residues 189–211 are cytoplasmic; the sequence is LARLFCGAEKMKFTRLFVTIMLT. Residues 212-232 traverse the membrane as a helical segment; sequence ILVFLLCGLPWGFFWFLLIWI. Topologically, residues 233–244 are extracellular; that stretch reads KGGFSVLDYRLY. The helical transmembrane segment at 245–265 threads the bilayer; that stretch reads LASIVLTVVNSCANPIIYFFV. Residues 266–305 lie on the Cytoplasmic side of the membrane; sequence GSFRHRLKHQTLKMVLQSALQDTPETHENMVEMSRIKAEQ.

It belongs to the G-protein coupled receptor 1 family. Mas subfamily. In terms of tissue distribution, expressed in a subset of sensory neurons that includes nociceptors. Expressed in the subclass of non-peptidergic sensory neurons that are IB4(+) and VR1(-).

It is found in the cell membrane. Functionally, orphan receptor. May be a receptor for RFamide-family neuropeptides such as NPFF and NPAF, which are analgesic in vivo. May regulate nociceptor function and/or development, including the sensation or modulation of pain. This Mus musculus (Mouse) protein is Mas-related G-protein coupled receptor member A7 (Mrgpra7).